We begin with the raw amino-acid sequence, 850 residues long: Pierisin (850 aa).

Ricin B-type lectin domains lie at 267 to 409 (GEFM…WNII), 413 to 560 (FRPI…WDIK), and 564 to 707 (YQYV…WYLK).

This sequence belongs to the pierisin ADP-ribosyltransferase family.

It catalyses the reaction a 2'-deoxyguanosine in DNA + NAD(+) = an N(2)-(ADP-L-ribosyl)-2'-deoxyguanosine in DNA + nicotinamide + H(+). Functionally, ADP-ribosylates double-stranded DNA by targeting the N2 amino group of dG residues. Induces apoptosis in a range of human cell lines. May play a role in destroying cells during pupation and/or defense against parasites. The protein is Pierisin of Pieris brassicae (White butterfly).